The sequence spans 214 residues: GTP cyclohydrolase 1 (214 aa).

3 residues coordinate Zn(2+): C101, H104, and C172.

It belongs to the GTP cyclohydrolase I family. Toroid-shaped homodecamer, composed of two pentamers of five dimers.

It carries out the reaction GTP + H2O = 7,8-dihydroneopterin 3'-triphosphate + formate + H(+). It functions in the pathway cofactor biosynthesis; 7,8-dihydroneopterin triphosphate biosynthesis; 7,8-dihydroneopterin triphosphate from GTP: step 1/1. This Gloeobacter violaceus (strain ATCC 29082 / PCC 7421) protein is GTP cyclohydrolase 1.